A 629-amino-acid polypeptide reads, in one-letter code: uncharacterized protein (629 aa).

Histidine 562 serves as the catalytic Proton acceptor.

It belongs to the GMC oxidoreductase family. FAD is required as a cofactor.

This is an uncharacterized protein from Mycobacterium tuberculosis (strain CDC 1551 / Oshkosh).